The sequence spans 335 residues: N-acetyl-gamma-glutamyl-phosphate reductase (335 aa).

C156 is an active-site residue.

Belongs to the NAGSA dehydrogenase family. Type 1 subfamily.

It localises to the cytoplasm. It carries out the reaction N-acetyl-L-glutamate 5-semialdehyde + phosphate + NADP(+) = N-acetyl-L-glutamyl 5-phosphate + NADPH + H(+). It functions in the pathway amino-acid biosynthesis; L-arginine biosynthesis; N(2)-acetyl-L-ornithine from L-glutamate: step 3/4. Its function is as follows. Catalyzes the NADPH-dependent reduction of N-acetyl-5-glutamyl phosphate to yield N-acetyl-L-glutamate 5-semialdehyde. This Aeromonas hydrophila subsp. hydrophila (strain ATCC 7966 / DSM 30187 / BCRC 13018 / CCUG 14551 / JCM 1027 / KCTC 2358 / NCIMB 9240 / NCTC 8049) protein is N-acetyl-gamma-glutamyl-phosphate reductase.